A 200-amino-acid polypeptide reads, in one-letter code: Small ribosomal subunit protein uS4 (200 aa).

The tract at residues 22–42 (TGKELEKRPYAPGPHGPNQRK) is disordered. The S4 RNA-binding domain maps to 92 to 152 (ARLDNLVYRM…EKSRNLAVIK (61 aa)).

The protein belongs to the universal ribosomal protein uS4 family. Part of the 30S ribosomal subunit. Contacts protein S5. The interaction surface between S4 and S5 is involved in control of translational fidelity.

Its function is as follows. One of the primary rRNA binding proteins, it binds directly to 16S rRNA where it nucleates assembly of the body of the 30S subunit. In terms of biological role, with S5 and S12 plays an important role in translational accuracy. The chain is Small ribosomal subunit protein uS4 from Bacillus cytotoxicus (strain DSM 22905 / CIP 110041 / 391-98 / NVH 391-98).